Reading from the N-terminus, the 122-residue chain is Large ribosomal subunit protein bL12 (122 aa).

This sequence belongs to the bacterial ribosomal protein bL12 family. In terms of assembly, homodimer. Part of the ribosomal stalk of the 50S ribosomal subunit. Forms a multimeric L10(L12)X complex, where L10 forms an elongated spine to which 2 to 4 L12 dimers bind in a sequential fashion. Binds GTP-bound translation factors.

Its function is as follows. Forms part of the ribosomal stalk which helps the ribosome interact with GTP-bound translation factors. Is thus essential for accurate translation. In Pseudomonas aeruginosa (strain LESB58), this protein is Large ribosomal subunit protein bL12.